Reading from the N-terminus, the 2351-residue chain is Protein FAM186A (2351 aa).

A coiled-coil region spans residues 296-340; the sequence is EAEKELSLKIIRDLSNENEMLQQKLQDAEEKCEQLIRSKIVIEQL. Disordered regions lie at residues 412–460, 470–489, 505–538, 593–667, 809–838, 868–976, 1805–1837, and 1888–1907; these read ERTP…SWKR, ETSG…SEAK, EMKS…GKSG, QFDD…SEQS, STVQ…SGMS, LQMK…RGLE, GGQS…PGQP, and FQPP…STPG. A compositionally biased stretch (basic and acidic residues) spans 433 to 446; sequence DSTKDNVSLKKGDF. Positions 472–484 are enriched in polar residues; that stretch reads SGPNLSDNKSGQK. Over residues 506-520 the composition is skewed to basic and acidic residues; the sequence is MKSFSEDKSKSPTEA. The span at 527 to 538 shows a compositional bias: polar residues; the sequence is LTETKSQGGKSG. Positions 603-612 are enriched in basic residues; the sequence is GKIKGKKHHI. Composition is skewed to basic and acidic residues over residues 619–632 and 812–823; these read SKEE…ELTK and QKDHKEKEKQRQ. Positions 812–860 form a coiled coil; sequence QKDHKEKEKQRQEQYLQEGQEQMSGMSLKQQLLGERNLLKEHYEKISEN. The segment covering 824–838 has biased composition (polar residues); sequence EQYLQEGQEQMSGMS. Composition is skewed to basic and acidic residues over residues 901-912, 939-955, and 964-976; these read AEQEEKQKQRGQ, LEKE…EAKH, and KGKE…RGLE. Residues 1816–1835 are compositionally biased toward pro residues; the sequence is PQAPPSPGQLPISRAPPTPG. Residues 1894 to 1907 show a composition bias toward polar residues; that stretch reads AEQSPYLQAPSTPG.

The protein belongs to the FAM186 family.

The chain is Protein FAM186A (FAM186A) from Homo sapiens (Human).